A 109-amino-acid polypeptide reads, in one-letter code: Cortistatin (109 aa).

A signal peptide spans 1–25 (MMGGRGTGGKWPSAFGLLLLWGVAA). Residues 26-93 (SALPLESGPT…PPPQQPPHLD (68 aa)) constitute a propeptide that is removed on maturation. The tract at residues 64 to 97 (ASSSTPVGGGTPGLSKSQERPPPQQPPHLDKKPC) is disordered. C97 and C108 are disulfide-bonded.

Belongs to the somatostatin family. As to expression, expressed in a subset of GABAergic cells in the cortex and hippocampus.

It is found in the secreted. This Mus musculus (Mouse) protein is Cortistatin (Cort).